We begin with the raw amino-acid sequence, 413 residues long: MKCSWREGNKIQLLENGEQYYPAVFKAIGEAQERIILETFIWFEDDVGKQLHAALLAAAQRGVKAEVLLDGYGSPDLSDEFVNELTAAGVVFRYYDPRPRLFGMRTNVFRRMHRKIVVIDARIAFIGGLNYSAEHMSSYGPEAKQDYAVRLEGPIVEDILQFELENLPGQSAARRWWRRHHKAEENRQPGEAQVLLVWRDNEEHRDDIERHYLKMLTQARREVIIANAYFFPGYRFLHALRKAARRGVRIKLIIQGEPDMPIVRVGARLLYNYLVKGGVQVFEYRRRPLHGKVALMDDHWATVGSSNLDPLSLSLNLEANVIIHDRNFNQTLRDNLNGIIAADCQQVDETMLPKRTWWNLTKSVLAFHFLRHFPALVGWLPAHTPRLAQVGPPAQPTMETQDRVETENTGVKP.

2 consecutive PLD phosphodiesterase domains span residues 108–135 (VFRRMHRKIVVIDARIAFIGGLNYSAEH) and 285–312 (RRRPLHGKVALMDDHWATVGSSNLDPLS). Active-site residues include His113, Lys115, Asp120, His290, Lys292, and Asp297. The interval 390–413 (VGPPAQPTMETQDRVETENTGVKP) is disordered.

Belongs to the phospholipase D family. Cardiolipin synthase subfamily. ClsB sub-subfamily.

The protein localises to the cell membrane. It carries out the reaction 2 a 1,2-diacyl-sn-glycero-3-phospho-(1'-sn-glycerol) = a cardiolipin + glycerol. Functionally, catalyzes the phosphatidyl group transfer from one phosphatidylglycerol molecule to another to form cardiolipin (CL) (diphosphatidylglycerol) and glycerol. In Escherichia coli O6:H1 (strain CFT073 / ATCC 700928 / UPEC), this protein is Cardiolipin synthase B.